Here is a 236-residue protein sequence, read N- to C-terminus: Exosome complex component Rrp4 (236 aa).

One can recognise an S1 motif domain in the interval 64 to 133 (GDKVIGKVIE…EIKESWLTLK (70 aa)). The KH domain occupies 141–199 (EGGHMVLIHASRVPRVIGKGGGMVNMVKELTATRIIIGQNGLIWIDGPIEGVTMAIAAI).

Belongs to the RRP4 family. In terms of assembly, component of the archaeal exosome complex. Forms a trimer of Rrp4 and/or Csl4 subunits. The trimer associates with a hexameric ring-like arrangement composed of 3 Rrp41-Rrp42 heterodimers.

It is found in the cytoplasm. In terms of biological role, non-catalytic component of the exosome, which is a complex involved in RNA degradation. Increases the RNA binding and the efficiency of RNA degradation. Confers strong poly(A) specificity to the exosome. The sequence is that of Exosome complex component Rrp4 from Thermoplasma acidophilum (strain ATCC 25905 / DSM 1728 / JCM 9062 / NBRC 15155 / AMRC-C165).